Here is a 210-residue protein sequence, read N- to C-terminus: Large ribosomal subunit protein bL25 (210 aa).

The segment at 185 to 210 is disordered; sequence APEPAGQPEVPPEPAEEAKAKTIEKE. Basic and acidic residues predominate over residues 200–210; the sequence is EEAKAKTIEKE.

It belongs to the bacterial ribosomal protein bL25 family. CTC subfamily. In terms of assembly, part of the 50S ribosomal subunit; part of the 5S rRNA/L5/L18/L25 subcomplex. Contacts the 5S rRNA. Binds to the 5S rRNA independently of L5 and L18.

In terms of biological role, this is one of the proteins that binds to the 5S RNA in the ribosome where it forms part of the central protuberance. The protein is Large ribosomal subunit protein bL25 of Desulforamulus reducens (strain ATCC BAA-1160 / DSM 100696 / MI-1) (Desulfotomaculum reducens).